A 79-amino-acid chain; its full sequence is Dolichyl-diphosphooligosaccharide--protein glycosyltransferase subunit TMEM258 (79 aa).

The next 2 membrane-spanning stretches (helical) occupy residues 17 to 37 (VFPHLTVVLLAIGMFFTAWFF) and 55 to 75 (LISLVASLFMGFGVLFLLLWV).

This sequence belongs to the OST5 family. In terms of assembly, component of the oligosaccharyltransferase (OST) complex.

The protein localises to the membrane. It localises to the endoplasmic reticulum. Its subcellular location is the cytoplasm. It functions in the pathway protein modification; protein glycosylation. Subunit of the oligosaccharyl transferase (OST) complex that catalyzes the initial transfer of a defined glycan (Glc(3)Man(9)GlcNAc(2) in eukaryotes) from the lipid carrier dolichol-pyrophosphate to an asparagine residue within an Asn-X-Ser/Thr consensus motif in nascent polypeptide chains, the first step in protein N-glycosylation. N-glycosylation occurs cotranslationally and the complex associates with the Sec61 complex at the channel-forming translocon complex that mediates protein translocation across the endoplasmic reticulum (ER). All subunits are required for a maximal enzyme activity. The chain is Dolichyl-diphosphooligosaccharide--protein glycosyltransferase subunit TMEM258 from Gallus gallus (Chicken).